Consider the following 142-residue polypeptide: MVLSPADKTNVKATWDKIGGHAGEYGGEALERTFASFPTTKTYFPHFDLSPGSAQVKAHGKKVADALTTAVGHLDDLPGALSALSDLHAHKLRVDPVNFKLLSHCLLVTLASHHPAEFTPAVHASLDKFFSAVSTVLTSKYR.

A Globin domain is found at 2-142; sequence VLSPADKTNV…VSTVLTSKYR (141 aa). Position 4 is a phosphoserine (S4). At K8 the chain carries N6-succinyllysine. Position 9 is a phosphothreonine (T9). Position 12 is an N6-succinyllysine (K12). K17 is subject to N6-acetyllysine; alternate. K17 carries the N6-succinyllysine; alternate modification. Position 25 is a phosphotyrosine (Y25). S36 is subject to Phosphoserine. K41 bears the N6-succinyllysine mark. S50 bears the Phosphoserine mark. Position 59 (H59) interacts with O2. A heme b-binding site is contributed by H88. S103 is modified (phosphoserine). Residue T109 is modified to Phosphothreonine. S125 is subject to Phosphoserine. Residues T135 and T138 each carry the phosphothreonine modification. Residue S139 is modified to Phosphoserine.

This sequence belongs to the globin family. In terms of assembly, heterotetramer of two alpha chains and two beta chains. As to expression, red blood cells.

Involved in oxygen transport from the lung to the various peripheral tissues. Functionally, hemopressin acts as an antagonist peptide of the cannabinoid receptor CNR1. Hemopressin-binding efficiently blocks cannabinoid receptor CNR1 and subsequent signaling. This is Hemoglobin subunit alpha (HBA) from Ailuropoda melanoleuca (Giant panda).